The chain runs to 327 residues: 2-keto-3-deoxygluconate permease (327 aa).

The next 10 membrane-spanning stretches (helical) occupy residues 10–30 (IPGG…TFSP), 42–62 (GMIT…GASI), 73–93 (KSGT…AIAS), 95–115 (IIPE…LALV), 139–159 (AGAF…IILG), 163–183 (IASF…VGFA), 199–219 (VQTL…LTVI), 224–244 (LLGI…LIIA), 254–274 (TAGI…VLIA), and 289–309 (SLVA…TSIW).

This sequence belongs to the KdgT transporter family.

It localises to the cell inner membrane. The catalysed reaction is 2-dehydro-3-deoxy-D-gluconate(in) + H(+)(in) = 2-dehydro-3-deoxy-D-gluconate(out) + H(+)(out). In terms of biological role, catalyzes the proton-dependent uptake of 2-keto-3-deoxygluconate (KDG) into the cell. The protein is 2-keto-3-deoxygluconate permease of Escherichia coli O139:H28 (strain E24377A / ETEC).